The following is a 310-amino-acid chain: Low affinity immunoglobulin gamma Fc region receptor II-b (310 aa).

The N-terminal stretch at 1–42 (MGILSFLPVLATESDWADCKSPQPWGHMLLWTAVLFLAPVAG) is a signal peptide. The Extracellular segment spans residues 43–217 (TPAAPPKAVL…KPVTITVQAP (175 aa)). 2 Ig-like C2-type domains span residues 48 to 127 (PKAV…VHLT) and 131 to 213 (EWLV…VTIT). 2 disulfides stabilise this stretch: Cys-71–Cys-113 and Cys-152–Cys-196. N-linked (GlcNAc...) asparagine glycans are attached at residues Asn-106, Asn-180, and Asn-187. The chain crosses the membrane as a helical span at residues 218–240 (SSSPMGIIVAVVTGIAVAAIVAA). The Cytoplasmic portion of the chain corresponds to 241–310 (VVALIYCRKK…LEEPDDQNRI (70 aa)). The short motif at 290 to 295 (ITYSLL) is the ITIM motif element. The residue at position 292 (Tyr-292) is a Phosphotyrosine; by SRC-type Tyr-kinases.

Interacts with INPP5D/SHIP1. Interacts with FGR. Interacts with LYN. As to quaternary structure, (Microbial infection) Isoform IIB1 interacts with measles virus protein N. Protein N is released in the blood following lysis of measles infected cells. This interaction presumably block inflammatory immune response. Phosphorylated by the SRC-type Tyr-kinases LYN and BLK. As to expression, is the most broadly distributed Fc-gamma-receptor. Expressed in monocyte, neutrophils, macrophages, basophils, eosinophils, Langerhans cells, B-cells, platelets cells and placenta (endothelial cells). Not detected in natural killer cells.

The protein localises to the cell membrane. Receptor for the Fc region of complexed or aggregated immunoglobulins gamma. Low affinity receptor. Involved in a variety of effector and regulatory functions such as phagocytosis of immune complexes and modulation of antibody production by B-cells. Binding to this receptor results in down-modulation of previous state of cell activation triggered via antigen receptors on B-cells (BCR), T-cells (TCR) or via another Fc receptor. Isoform IIB1 fails to mediate endocytosis or phagocytosis. Isoform IIB2 does not trigger phagocytosis. This chain is Low affinity immunoglobulin gamma Fc region receptor II-b (FCGR2B), found in Homo sapiens (Human).